The sequence spans 455 residues: Fumarate hydratase class II (455 aa).

Residues 96-98 (SGT), 122-125 (HPND), 132-134 (SSN), and Thr-180 contribute to the substrate site. His-181 (proton donor/acceptor) is an active-site residue. Ser-311 is an active-site residue. Residues Ser-312 and 317–319 (KVN) contribute to the substrate site.

Belongs to the class-II fumarase/aspartase family. Fumarase subfamily. As to quaternary structure, homotetramer.

The protein resides in the cytoplasm. It carries out the reaction (S)-malate = fumarate + H2O. It participates in carbohydrate metabolism; tricarboxylic acid cycle; (S)-malate from fumarate: step 1/1. In terms of biological role, involved in the TCA cycle. Catalyzes the stereospecific interconversion of fumarate to L-malate. The polypeptide is Fumarate hydratase class II (Listeria monocytogenes serovar 1/2a (strain ATCC BAA-679 / EGD-e)).